The following is a 106-amino-acid chain: COX assembly mitochondrial protein homolog (106 aa).

The residue at position 2 (alanine 2) is an N-acetylalanine. One can recognise a CHCH domain in the interval 28-71 (RERCSEQVEDFTRCCKDSGILMVLKCRKENSALKDCLTAYYNDP). 2 short sequence motifs (cx9C motif) span residues 31-41 (CSEQVEDFTRC) and 53-63 (CRKENSALKDC). Cystine bridges form between cysteine 31-cysteine 63 and cysteine 41-cysteine 53.

The protein belongs to the CMC family. In terms of assembly, component of the MITRAC (mitochondrial translation regulation assembly intermediate of cytochrome c oxidase complex) complex, the core components of this complex being COA3/MITRAC12 and COX14.

The protein resides in the mitochondrion. Component of the MITRAC (mitochondrial translation regulation assembly intermediate of cytochrome c oxidase complex) complex, that regulates cytochrome c oxidase assembly. In Mus musculus (Mouse), this protein is COX assembly mitochondrial protein homolog (Cmc1).